Reading from the N-terminus, the 192-residue chain is MAKATTIKEALAKWEERTGQKAGEAKEVKLYAQIPPLEKMDASLSTLVNCEKLSLSTNCIEKIANLNGLKYLKILSLGRNNIKNLNGLEAVGETLEELWISYNLIEKLKGIHVMKKLKVLYMSNNLVKDWAEFSKLGELPLLGDIVFVGNPLEEKHTAEGNWMEEAVKRLPKLKKLDGNPVIKQEEEEGDES.

LRR repeat units lie at residues 49-70 (NCEK…NGLK), 71-92 (YLKI…EAVG), 94-115 (TLEE…HVMK), and 116-137 (KLKV…SKLG). The region spanning 150–192 (NPLEEKHTAEGNWMEEAVKRLPKLKKLDGNPVIKQEEEEGDES) is the LRRCT domain.

This sequence belongs to the dynein light chain LC1-type family. Interacts with DNAH5, a outer arm dynein heavy chain. Interacts with tubulin located within the A-tubule of the outer doublets in a ATP-independent manner.

It localises to the cytoplasm. The protein resides in the cytoskeleton. Its subcellular location is the cilium axoneme. Part of the multisubunit axonemal ATPase complexes that generate the force for cilia motility and govern beat frequency. Component of the outer arm dynein (ODA). May be involved in a mechanosensory feedback mechanism controlling ODA activity based on external conformational cues by tethering the outer arm dynein heavy chain (DNAH5) to the microtubule within the axoneme. The protein is Dynein axonemal light chain 1 (dnal1) of Xenopus laevis (African clawed frog).